A 174-amino-acid polypeptide reads, in one-letter code: Endoribonuclease YbeY (174 aa).

Residues His-129, His-133, and His-139 each coordinate Zn(2+).

The protein belongs to the endoribonuclease YbeY family. Zn(2+) is required as a cofactor.

Its subcellular location is the cytoplasm. In terms of biological role, single strand-specific metallo-endoribonuclease involved in late-stage 70S ribosome quality control and in maturation of the 3' terminus of the 16S rRNA. In Lactobacillus delbrueckii subsp. bulgaricus (strain ATCC 11842 / DSM 20081 / BCRC 10696 / JCM 1002 / NBRC 13953 / NCIMB 11778 / NCTC 12712 / WDCM 00102 / Lb 14), this protein is Endoribonuclease YbeY.